A 346-amino-acid chain; its full sequence is NADH-ubiquinone oxidoreductase chain 2 (346 aa).

10 helical membrane passes run 25–45 (HWVL…PLIS), 60–80 (FLTQ…NAWA), 95–115 (CLLL…HFWF), 124–144 (LMTA…LLLM), 149–169 (LNPA…GWMG), 178–195 (ILAF…IILV), 200–219 (LALL…FMAL), 247–267 (VLLS…WLII), 274–294 (EMTP…FFYL), and 326–346 (AILA…HAIV).

Belongs to the complex I subunit 2 family.

The protein localises to the mitochondrion inner membrane. It carries out the reaction a ubiquinone + NADH + 5 H(+)(in) = a ubiquinol + NAD(+) + 4 H(+)(out). Functionally, core subunit of the mitochondrial membrane respiratory chain NADH dehydrogenase (Complex I) that is believed to belong to the minimal assembly required for catalysis. Complex I functions in the transfer of electrons from NADH to the respiratory chain. The immediate electron acceptor for the enzyme is believed to be ubiquinone. This Anas capensis (Cape teal) protein is NADH-ubiquinone oxidoreductase chain 2 (MT-ND2).